Here is a 74-residue protein sequence, read N- to C-terminus: UPF0435 protein GTNG_0390 (74 aa).

This sequence belongs to the UPF0435 family.

The polypeptide is UPF0435 protein GTNG_0390 (Geobacillus thermodenitrificans (strain NG80-2)).